The following is a 1905-amino-acid chain: von Willebrand factor A domain-containing protein 8 (1905 aa).

A mitochondrion-targeting transit peptide spans 1 to 45 (MQSRLLLLGAPGGLGDVASRRVRLLLRQVLRGRPGGDQQRLEVRL). The interval 1-260 (MQSRLLLLGA…PLDPPLRSRF (260 aa)) is interaction with PEX7. Residue 446–453 (GGKGCGKT) participates in ATP binding. Residues 1541–1560 (ERDSNEDVSDPKHGKEDPDN) show a composition bias toward basic and acidic residues. The segment at 1541-1583 (ERDSNEDVSDPKHGKEDPDNMPHVGGNTWAGGTGGRDTAGLGG) is disordered. Gly residues predominate over residues 1568-1583 (TWAGGTGGRDTAGLGG). A VWFA domain is found at 1714–1896 (RLRLVVDVSG…KKIPQILQQI (183 aa)).

Monomer. Interacts with PEX7. Interacts with PEX5 in a PEX7-dependent manner. As to expression, isoform 1 is predominantly expressed in liver, kidney, pancreas, heart, and skeletal muscle (at protein level).

The protein localises to the mitochondrion. Its function is as follows. Exhibits ATPase activity in vitro. This is von Willebrand factor A domain-containing protein 8 (Vwa8) from Mus musculus (Mouse).